A 469-amino-acid polypeptide reads, in one-letter code: Probable periplasmic serine endoprotease DegP-like (469 aa).

An N-terminal signal peptide occupies residues 1–25; that stretch reads MKVCQKYTAVLLVWLSAVVSMRAGA. Residues His108, Asp138, and Ser211 each act as charge relay system in the active site. Substrate-binding positions include 209 to 211 and 266 to 270; these read GNS and LGVLI. PDZ domains lie at 255–346 and 352–457; these read LKDT…VRRG and AVEI…IRQG.

It belongs to the peptidase S1C family.

Its subcellular location is the periplasm. The catalysed reaction is Acts on substrates that are at least partially unfolded. The cleavage site P1 residue is normally between a pair of hydrophobic residues, such as Val-|-Val.. Its function is as follows. Might be efficient in the degradation of transiently denatured and unfolded proteins which accumulate in the periplasm following stress conditions. The sequence is that of Probable periplasmic serine endoprotease DegP-like (mucD) from Hahella chejuensis (strain KCTC 2396).